We begin with the raw amino-acid sequence, 71 residues long: Exodeoxyribonuclease 7 small subunit (71 aa).

The protein belongs to the XseB family. In terms of assembly, heterooligomer composed of large and small subunits.

Its subcellular location is the cytoplasm. The enzyme catalyses Exonucleolytic cleavage in either 5'- to 3'- or 3'- to 5'-direction to yield nucleoside 5'-phosphates.. Functionally, bidirectionally degrades single-stranded DNA into large acid-insoluble oligonucleotides, which are then degraded further into small acid-soluble oligonucleotides. This chain is Exodeoxyribonuclease 7 small subunit, found in Streptococcus pyogenes serotype M1.